Consider the following 875-residue polypeptide: uncharacterized protein (875 aa).

The segment at 83–149 (PFQPPPPQPF…QPPQPPPQQL (67 aa)) is disordered. Residues 101-147 (QQPPQPPPDQPQQPQPPQQPPQQPPQQQPQPPQPPQQPPQPPQPPPQ) are compositionally biased toward pro residues.

This is an uncharacterized protein from Orgyia pseudotsugata multicapsid polyhedrosis virus (OpMNPV).